The sequence spans 451 residues: Tubulin alpha chain (451 aa).

GTP is bound at residue Q11. Position 40 is an N6-acetyllysine (K40). GTP-binding residues include E71, G144, T145, T179, N206, and N228. E71 serves as a coordination point for Mg(2+). E254 is an active-site residue.

Belongs to the tubulin family. As to quaternary structure, dimer of alpha and beta chains. A typical microtubule is a hollow water-filled tube with an outer diameter of 25 nm and an inner diameter of 15 nM. Alpha-beta heterodimers associate head-to-tail to form protofilaments running lengthwise along the microtubule wall with the beta-tubulin subunit facing the microtubule plus end conferring a structural polarity. Microtubules usually have 13 protofilaments but different protofilament numbers can be found in some organisms and specialized cells. It depends on Mg(2+) as a cofactor. Post-translationally, undergoes a tyrosination/detyrosination cycle, the cyclic removal and re-addition of a C-terminal tyrosine residue by the enzymes tubulin tyrosine carboxypeptidase (TTCP) and tubulin tyrosine ligase (TTL), respectively. Acetylation of alpha chains at Lys-40 stabilizes microtubules and affects affinity and processivity of microtubule motors. This modification has a role in multiple cellular functions, ranging from cell motility, cell cycle progression or cell differentiation to intracellular trafficking and signaling.

It is found in the cytoplasm. The protein localises to the cytoskeleton. It carries out the reaction GTP + H2O = GDP + phosphate + H(+). Its function is as follows. Tubulin is the major constituent of microtubules, a cylinder consisting of laterally associated linear protofilaments composed of alpha- and beta-tubulin heterodimers. Microtubules grow by the addition of GTP-tubulin dimers to the microtubule end, where a stabilizing cap forms. Below the cap, tubulin dimers are in GDP-bound state, owing to GTPase activity of alpha-tubulin. The polypeptide is Tubulin alpha chain (TUBA) (Triticum aestivum (Wheat)).